A 144-amino-acid chain; its full sequence is Large ribosomal subunit protein uL15 (144 aa).

Positions 1 to 59 (MELNNLKPAEGAKHAKRRVGRGIGSGLGKTAGRGHKGQKSRSGGFHKVGFEGGQMPLQR) are disordered. A compositionally biased stretch (gly residues) spans 21 to 31 (RGIGSGLGKTA).

Belongs to the universal ribosomal protein uL15 family. In terms of assembly, part of the 50S ribosomal subunit.

Functionally, binds to the 23S rRNA. The sequence is that of Large ribosomal subunit protein uL15 from Burkholderia thailandensis (strain ATCC 700388 / DSM 13276 / CCUG 48851 / CIP 106301 / E264).